An 87-amino-acid chain; its full sequence is MKNNYNRINTFIVYLMVTFSLISIISITECTPNHDPCPPQYAEALCLNGGTCFSVTIMGSDNYNCICAPGFRGWRCQEKDLDHPVNQ.

A signal peptide spans 1–32 (MKNNYNRINTFIVYLMVTFSLISIISITECTP). An EGF-like domain is found at 33–77 (NHDPCPPQYAEALCLNGGTCFSVTIMGSDNYNCICAPGFRGWRCQ). 3 disulfides stabilise this stretch: Cys37-Cys52, Cys46-Cys65, and Cys67-Cys76.

O-glycosylated. As to expression, expressed by the venom gland.

Its subcellular location is the secreted. In Manica rubida (European giant red ant), this protein is U18-myrmicitoxin-Mri1a.